The primary structure comprises 148 residues: Small ribosomal subunit protein uS7m (148 aa).

The protein belongs to the universal ribosomal protein uS7 family. As to quaternary structure, part of the small ribosomal subunit.

It localises to the mitochondrion. Functionally, one of the primary rRNA binding proteins, it binds directly to 18S rRNA where it nucleates assembly of the head domain of the small subunit. This is Small ribosomal subunit protein uS7m (RPS7) from Arabidopsis thaliana (Mouse-ear cress).